The following is a 554-amino-acid chain: 3-(3-hydroxy-phenyl)propionate/3-hydroxycinnamic acid hydroxylase (554 aa).

FAD contacts are provided by residues Q17–K46 and F285–D295.

It belongs to the PheA/TfdB FAD monooxygenase family. FAD serves as cofactor.

The catalysed reaction is 3-(3-hydroxyphenyl)propanoate + NADH + O2 + H(+) = 3-(2,3-dihydroxyphenyl)propanoate + NAD(+) + H2O. It carries out the reaction (2E)-3-(3-hydroxyphenyl)prop-2-enoate + NADH + O2 + H(+) = (2E)-3-(2,3-dihydroxyphenyl)prop-2-enoate + NAD(+) + H2O. It participates in aromatic compound metabolism; 3-phenylpropanoate degradation. In terms of biological role, catalyzes the insertion of one atom of molecular oxygen into position 2 of the phenyl ring of 3-(3-hydroxyphenyl)propionate (3-HPP) and hydroxycinnamic acid (3HCI). The polypeptide is 3-(3-hydroxy-phenyl)propionate/3-hydroxycinnamic acid hydroxylase (Escherichia coli (strain K12 / DH10B)).